A 258-amino-acid polypeptide reads, in one-letter code: DNA repair protein RecO (258 aa).

Belongs to the RecO family.

Involved in DNA repair and RecF pathway recombination. In Oceanobacillus iheyensis (strain DSM 14371 / CIP 107618 / JCM 11309 / KCTC 3954 / HTE831), this protein is DNA repair protein RecO.